Reading from the N-terminus, the 99-residue chain is Sm-like protein LSM7 (99 aa).

A Sm domain is found at 6 to 86; that stretch reads ETVLDLAKFV…VMLVSPTDGT (81 aa).

Belongs to the snRNP Sm proteins family. In terms of assembly, component of the heptameric LSM1-LSM7 complex that forms a seven-membered ring structure with a donut shape. The LSM subunits are arranged in the order LSM1, LSM2, LSM3, LSM6, LSM5, LSM7 and LSM4. Component of the heptameric LSM2-LSM8 complex that forms a seven-membered ring structure with a donut shape. The LSM subunits are arranged in the order LSM8, LSM2, LSM3, LSM6, LSM5, LSM7 and LSM4. LSM7 subunit interacts only with its two neighboring subunits, LSM5 and LSM4. Expressed in roots, leaves, stems, flowers and siliques.

The protein localises to the cytoplasm. Its subcellular location is the nucleus. Functionally, component of LSM protein complexes, which are involved in RNA processing. Component of the cytoplasmic LSM1-LSM7 complex which is involved in mRNA degradation by promoting decapping and leading to accurate 5'-3' mRNA decay. The cytoplasmic LSM1-LSM7 complex regulates developmental gene expression by the decapping of specific development-related transcripts. Component of the nuclear LSM2-LSM8 complex which is involved splicing nuclear mRNAs. LSM2-LSM8 binds directly to the U6 small nuclear RNAs (snRNAs) and is essential for accurate splicing of selected development-related mRNAs through the stabilization of the spliceosomal U6 snRNA. Plays a critical role in the regulation of development-related gene expression. The protein is Sm-like protein LSM7 of Arabidopsis thaliana (Mouse-ear cress).